The following is a 120-amino-acid chain: Large ribosomal subunit protein bL19 (120 aa).

The protein belongs to the bacterial ribosomal protein bL19 family.

Its function is as follows. This protein is located at the 30S-50S ribosomal subunit interface and may play a role in the structure and function of the aminoacyl-tRNA binding site. The sequence is that of Large ribosomal subunit protein bL19 from Geobacillus kaustophilus (strain HTA426).